The chain runs to 267 residues: Acyl-[acyl-carrier-protein]--UDP-N-acetylglucosamine O-acyltransferase (267 aa).

The protein belongs to the transferase hexapeptide repeat family. LpxA subfamily. As to quaternary structure, homotrimer.

The protein resides in the cytoplasm. The enzyme catalyses a (3R)-hydroxyacyl-[ACP] + UDP-N-acetyl-alpha-D-glucosamine = a UDP-3-O-[(3R)-3-hydroxyacyl]-N-acetyl-alpha-D-glucosamine + holo-[ACP]. The protein operates within glycolipid biosynthesis; lipid IV(A) biosynthesis; lipid IV(A) from (3R)-3-hydroxytetradecanoyl-[acyl-carrier-protein] and UDP-N-acetyl-alpha-D-glucosamine: step 1/6. In terms of biological role, involved in the biosynthesis of lipid A, a phosphorylated glycolipid that anchors the lipopolysaccharide to the outer membrane of the cell. The sequence is that of Acyl-[acyl-carrier-protein]--UDP-N-acetylglucosamine O-acyltransferase from Proteus mirabilis (strain HI4320).